A 55-amino-acid chain; its full sequence is Large ribosomal subunit protein bL33 (55 aa).

This sequence belongs to the bacterial ribosomal protein bL33 family.

The protein is Large ribosomal subunit protein bL33 of Bordetella avium (strain 197N).